Consider the following 418-residue polypeptide: Serine hydroxymethyltransferase (418 aa).

Residues Leu121 and 125 to 127 (GHL) each bind (6S)-5,6,7,8-tetrahydrofolate. The residue at position 230 (Lys230) is an N6-(pyridoxal phosphate)lysine. Position 355 to 357 (355 to 357 (SPF)) interacts with (6S)-5,6,7,8-tetrahydrofolate.

This sequence belongs to the SHMT family. As to quaternary structure, homodimer. Pyridoxal 5'-phosphate is required as a cofactor.

It is found in the cytoplasm. The catalysed reaction is (6R)-5,10-methylene-5,6,7,8-tetrahydrofolate + glycine + H2O = (6S)-5,6,7,8-tetrahydrofolate + L-serine. The protein operates within one-carbon metabolism; tetrahydrofolate interconversion. It participates in amino-acid biosynthesis; glycine biosynthesis; glycine from L-serine: step 1/1. Catalyzes the reversible interconversion of serine and glycine with tetrahydrofolate (THF) serving as the one-carbon carrier. This reaction serves as the major source of one-carbon groups required for the biosynthesis of purines, thymidylate, methionine, and other important biomolecules. Also exhibits THF-independent aldolase activity toward beta-hydroxyamino acids, producing glycine and aldehydes, via a retro-aldol mechanism. The polypeptide is Serine hydroxymethyltransferase (Methylococcus capsulatus (strain ATCC 33009 / NCIMB 11132 / Bath)).